Consider the following 364-residue polypeptide: Spermidine/putrescine import ATP-binding protein PotA (364 aa).

The region spanning 6 to 236 (IEIRQIYKSY…PANLHVAMFI (231 aa)) is the ABC transporter domain. ATP is bound at residue 38 to 45 (GPSGCGKT).

The protein belongs to the ABC transporter superfamily. Spermidine/putrescine importer (TC 3.A.1.11.1) family. As to quaternary structure, the complex is composed of two ATP-binding proteins (PotA), two transmembrane proteins (PotB and PotC) and a solute-binding protein (PotD).

The protein localises to the cell inner membrane. The enzyme catalyses ATP + H2O + polyamine-[polyamine-binding protein]Side 1 = ADP + phosphate + polyamineSide 2 + [polyamine-binding protein]Side 1.. Functionally, part of the ABC transporter complex PotABCD involved in spermidine/putrescine import. Responsible for energy coupling to the transport system. This chain is Spermidine/putrescine import ATP-binding protein PotA, found in Legionella pneumophila subsp. pneumophila (strain Philadelphia 1 / ATCC 33152 / DSM 7513).